Consider the following 882-residue polypeptide: Leucine--tRNA ligase (882 aa).

The short motif at 43–53 is the 'HIGH' region element; sequence PYPSGRIHMGH. Residues 634–638 carry the 'KMSKS' region motif; sequence KMSKS. Residue Lys637 participates in ATP binding.

Belongs to the class-I aminoacyl-tRNA synthetase family.

The protein localises to the cytoplasm. The catalysed reaction is tRNA(Leu) + L-leucine + ATP = L-leucyl-tRNA(Leu) + AMP + diphosphate. This is Leucine--tRNA ligase from Rhodopseudomonas palustris (strain BisB18).